The following is a 141-amino-acid chain: Large ribosomal subunit protein uL11 (141 aa).

Belongs to the universal ribosomal protein uL11 family. As to quaternary structure, part of the ribosomal stalk of the 50S ribosomal subunit. Interacts with L10 and the large rRNA to form the base of the stalk. L10 forms an elongated spine to which L12 dimers bind in a sequential fashion forming a multimeric L10(L12)X complex. In terms of processing, one or more lysine residues are methylated.

Functionally, forms part of the ribosomal stalk which helps the ribosome interact with GTP-bound translation factors. The sequence is that of Large ribosomal subunit protein uL11 from Geobacillus sp. (strain WCH70).